Consider the following 610-residue polypeptide: Elongation factor 4 (610 aa).

In terms of domain architecture, tr-type G spans 11–193 (ENIRNFSIIA…QIVEKVPAPS (183 aa)). GTP-binding positions include 23-28 (DHGKST) and 140-143 (NKID).

The protein belongs to the TRAFAC class translation factor GTPase superfamily. Classic translation factor GTPase family. LepA subfamily.

The protein localises to the cell membrane. The enzyme catalyses GTP + H2O = GDP + phosphate + H(+). Functionally, required for accurate and efficient protein synthesis under certain stress conditions. May act as a fidelity factor of the translation reaction, by catalyzing a one-codon backward translocation of tRNAs on improperly translocated ribosomes. Back-translocation proceeds from a post-translocation (POST) complex to a pre-translocation (PRE) complex, thus giving elongation factor G a second chance to translocate the tRNAs correctly. Binds to ribosomes in a GTP-dependent manner. The protein is Elongation factor 4 of Streptococcus equi subsp. zooepidemicus (strain H70).